We begin with the raw amino-acid sequence, 353 residues long: Photosystem II protein D1 (353 aa).

Thr2 is subject to N-acetylthreonine. Thr2 is subject to Phosphothreonine. The next 3 helical transmembrane spans lie at 29-46, 118-133, and 142-156; these read YIGW…TATS, HFLL…EWEL, and WIAV…AATA. His118 provides a ligand contact to chlorophyll a. Tyr126 contributes to the pheophytin a binding site. [CaMn4O5] cluster-binding residues include Asp170 and Glu189. The helical transmembrane segment at 197 to 218 threads the bilayer; it reads FHMLGVAGVFGGSLFSAMHGSL. Residue His198 coordinates chlorophyll a. A quinone contacts are provided by residues His215 and 264–265; that span reads SF. Position 215 (His215) interacts with Fe cation. His272 contributes to the Fe cation binding site. A helical membrane pass occupies residues 274–288; sequence FLTAWPVVGIWFTAL. 4 residues coordinate [CaMn4O5] cluster: His332, Glu333, Asp342, and Ala344. A propeptide spanning residues 345-353 is cleaved from the precursor; the sequence is VVEAPSTNG.

It belongs to the reaction center PufL/M/PsbA/D family. PSII is composed of 1 copy each of membrane proteins PsbA, PsbB, PsbC, PsbD, PsbE, PsbF, PsbH, PsbI, PsbJ, PsbK, PsbL, PsbM, PsbT, PsbX, PsbY, PsbZ, Psb30/Ycf12, at least 3 peripheral proteins of the oxygen-evolving complex and a large number of cofactors. It forms dimeric complexes. The D1/D2 heterodimer binds P680, chlorophylls that are the primary electron donor of PSII, and subsequent electron acceptors. It shares a non-heme iron and each subunit binds pheophytin, quinone, additional chlorophylls, carotenoids and lipids. D1 provides most of the ligands for the Mn4-Ca-O5 cluster of the oxygen-evolving complex (OEC). There is also a Cl(-1) ion associated with D1 and D2, which is required for oxygen evolution. The PSII complex binds additional chlorophylls, carotenoids and specific lipids. serves as cofactor. Tyr-161 forms a radical intermediate that is referred to as redox-active TyrZ, YZ or Y-Z. Post-translationally, C-terminally processed by CTPA; processing is essential to allow assembly of the oxygen-evolving complex and thus photosynthetic growth.

Its subcellular location is the plastid. It is found in the chloroplast thylakoid membrane. The enzyme catalyses 2 a plastoquinone + 4 hnu + 2 H2O = 2 a plastoquinol + O2. In terms of biological role, photosystem II (PSII) is a light-driven water:plastoquinone oxidoreductase that uses light energy to abstract electrons from H(2)O, generating O(2) and a proton gradient subsequently used for ATP formation. It consists of a core antenna complex that captures photons, and an electron transfer chain that converts photonic excitation into a charge separation. The D1/D2 (PsbA/PsbD) reaction center heterodimer binds P680, the primary electron donor of PSII as well as several subsequent electron acceptors. The chain is Photosystem II protein D1 from Aethionema cordifolium (Lebanon stonecress).